The chain runs to 113 residues: Hydrogenase maturation factor HybF (113 aa).

Ni(2+)-binding residues include His2 and Glu3. Zn(2+) is bound by residues Cys73, Cys76, Cys89, and Cys92.

It belongs to the HypA/HybF family. HybF subfamily.

Involved in the maturation of [NiFe] hydrogenases. Required for nickel insertion into the metal center of the hydrogenase. This chain is Hydrogenase maturation factor HybF, found in Morganella morganii (Proteus morganii).